The sequence spans 481 residues: Glutamyl-tRNA(Gln) amidotransferase subunit A (481 aa).

Active-site charge relay system residues include Lys-74 and Ser-149. Residue Ser-173 is the Acyl-ester intermediate of the active site.

This sequence belongs to the amidase family. GatA subfamily. Heterotrimer of A, B and C subunits.

It carries out the reaction L-glutamyl-tRNA(Gln) + L-glutamine + ATP + H2O = L-glutaminyl-tRNA(Gln) + L-glutamate + ADP + phosphate + H(+). Its function is as follows. Allows the formation of correctly charged Gln-tRNA(Gln) through the transamidation of misacylated Glu-tRNA(Gln) in organisms which lack glutaminyl-tRNA synthetase. The reaction takes place in the presence of glutamine and ATP through an activated gamma-phospho-Glu-tRNA(Gln). The polypeptide is Glutamyl-tRNA(Gln) amidotransferase subunit A (Francisella tularensis subsp. tularensis (strain FSC 198)).